A 173-amino-acid chain; its full sequence is ATP-dependent protease subunit HslV (173 aa).

Threonine 2 is an active-site residue. The Na(+) site is built by glycine 158, aspartate 161, and threonine 164.

It belongs to the peptidase T1B family. HslV subfamily. A double ring-shaped homohexamer of HslV is capped on each side by a ring-shaped HslU homohexamer. The assembly of the HslU/HslV complex is dependent on binding of ATP.

The protein localises to the cytoplasm. The catalysed reaction is ATP-dependent cleavage of peptide bonds with broad specificity.. Allosterically activated by HslU binding. Protease subunit of a proteasome-like degradation complex believed to be a general protein degrading machinery. In Mannheimia succiniciproducens (strain KCTC 0769BP / MBEL55E), this protein is ATP-dependent protease subunit HslV.